A 377-amino-acid polypeptide reads, in one-letter code: Uroporphyrinogen decarboxylase (377 aa).

Substrate contacts are provided by residues R40–R44, D89, Y169, S224, and H354.

This sequence belongs to the uroporphyrinogen decarboxylase family. As to quaternary structure, homodimer.

The protein resides in the cytoplasm. It catalyses the reaction uroporphyrinogen III + 4 H(+) = coproporphyrinogen III + 4 CO2. Its pathway is porphyrin-containing compound metabolism; protoporphyrin-IX biosynthesis; coproporphyrinogen-III from 5-aminolevulinate: step 4/4. Its function is as follows. Catalyzes the decarboxylation of four acetate groups of uroporphyrinogen-III to yield coproporphyrinogen-III. In Leifsonia xyli subsp. xyli (strain CTCB07), this protein is Uroporphyrinogen decarboxylase.